A 269-amino-acid chain; its full sequence is Diaminopimelate epimerase (269 aa).

Residues asparagine 15, glutamine 49, and asparagine 66 each coordinate substrate. The Proton donor role is filled by cysteine 75. Residues 76–77 (GN), asparagine 155, asparagine 187, and 204–205 (ER) each bind substrate. Cysteine 213 acts as the Proton acceptor in catalysis. 214 to 215 (GS) provides a ligand contact to substrate.

It belongs to the diaminopimelate epimerase family. Homodimer.

It is found in the cytoplasm. The enzyme catalyses (2S,6S)-2,6-diaminopimelate = meso-2,6-diaminopimelate. The protein operates within amino-acid biosynthesis; L-lysine biosynthesis via DAP pathway; DL-2,6-diaminopimelate from LL-2,6-diaminopimelate: step 1/1. Catalyzes the stereoinversion of LL-2,6-diaminopimelate (L,L-DAP) to meso-diaminopimelate (meso-DAP), a precursor of L-lysine and an essential component of the bacterial peptidoglycan. The polypeptide is Diaminopimelate epimerase (Rickettsia canadensis (strain McKiel)).